The following is a 445-amino-acid chain: Phosphoglucosamine mutase (445 aa).

S102 functions as the Phosphoserine intermediate in the catalytic mechanism. Mg(2+) contacts are provided by S102, D241, D243, and D245. At S102 the chain carries Phosphoserine.

It belongs to the phosphohexose mutase family. The cofactor is Mg(2+). Post-translationally, activated by phosphorylation.

It carries out the reaction alpha-D-glucosamine 1-phosphate = D-glucosamine 6-phosphate. Functionally, catalyzes the conversion of glucosamine-6-phosphate to glucosamine-1-phosphate. This Proteus mirabilis (strain HI4320) protein is Phosphoglucosamine mutase.